The chain runs to 126 residues: Glycine cleavage system H protein (126 aa).

In terms of domain architecture, Lipoyl-binding spans 23-104 (TLTVGITDHA…PYESWLFKIK (82 aa)). K64 is modified (N6-lipoyllysine).

It belongs to the GcvH family. In terms of assembly, the glycine cleavage system is composed of four proteins: P, T, L and H. Requires (R)-lipoate as cofactor.

Functionally, the glycine cleavage system catalyzes the degradation of glycine. The H protein shuttles the methylamine group of glycine from the P protein to the T protein. In Paraburkholderia phytofirmans (strain DSM 17436 / LMG 22146 / PsJN) (Burkholderia phytofirmans), this protein is Glycine cleavage system H protein.